Consider the following 329-residue polypeptide: Serpentine receptor class alpha-3 (329 aa).

7 consecutive transmembrane segments (helical) span residues 25 to 45 (LIYF…LKVI), 57 to 77 (ILLY…GITI), 104 to 124 (YLEM…GLLF), 144 to 164 (GIIT…IIIW), 187 to 207 (TMFF…SLLI), 238 to 258 (ICFL…GVFL), and 273 to 293 (FWVV…ILLI).

Belongs to the nematode receptor-like protein sra family.

It is found in the membrane. This is Serpentine receptor class alpha-3 (sra-3) from Caenorhabditis elegans.